Reading from the N-terminus, the 176-residue chain is Probable DNA-directed RNA polymerase subunit delta (176 aa).

Residues 14-81 (CSMIEVVHSV…GENRWGLRSW (68 aa)) enclose the HTH HARE-type domain. The disordered stretch occupies residues 91–176 (ILPQPKPKKK…ETEEEEEEEL (86 aa)). Residues 106–176 (DGFDDYIEED…ETEEEEEEEL (71 aa)) show a composition bias toward acidic residues.

It belongs to the RpoE family. RNAP is composed of a core of 2 alpha, a beta and a beta' subunits. The core is associated with a delta subunit and one of several sigma factors.

Participates in both the initiation and recycling phases of transcription. In the presence of the delta subunit, RNAP displays an increased specificity of transcription, a decreased affinity for nucleic acids, and an increased efficiency of RNA synthesis because of enhanced recycling. In Bacillus thuringiensis (strain Al Hakam), this protein is Probable DNA-directed RNA polymerase subunit delta.